The sequence spans 292 residues: tRNA(Ile)-lysidine synthase (292 aa).

32–37 contributes to the ATP binding site; sequence SGGADS.

It belongs to the tRNA(Ile)-lysidine synthase family.

It is found in the cytoplasm. It catalyses the reaction cytidine(34) in tRNA(Ile2) + L-lysine + ATP = lysidine(34) in tRNA(Ile2) + AMP + diphosphate + H(+). Its function is as follows. Ligates lysine onto the cytidine present at position 34 of the AUA codon-specific tRNA(Ile) that contains the anticodon CAU, in an ATP-dependent manner. Cytidine is converted to lysidine, thus changing the amino acid specificity of the tRNA from methionine to isoleucine. The polypeptide is tRNA(Ile)-lysidine synthase (Corynebacterium diphtheriae (strain ATCC 700971 / NCTC 13129 / Biotype gravis)).